The primary structure comprises 515 residues: ADP,ATP carrier protein 1 (515 aa).

12 helical membrane passes run 24–44, 62–82, 93–113, 124–144, 149–169, 184–204, 226–246, 286–306, 329–349, 358–378, 383–403, and 465–485; these read LKKV…YTVL, AIPF…MLIY, ALFY…PTVI, EFAD…VAIL, FAAF…LMFW, FYAL…RAIV, LLMA…WWIN, YILL…LIEV, FSFW…GNVI, ALVT…LVIF, SGLV…VGAI, and IGAM…IWLV.

It belongs to the ADP/ATP translocase tlc family.

The protein localises to the cell membrane. This Chlamydia pneumoniae (Chlamydophila pneumoniae) protein is ADP,ATP carrier protein 1 (tlcA).